A 354-amino-acid chain; its full sequence is DNA integrity scanning protein DisA (354 aa).

The 139-residue stretch at Glu6–Ser144 folds into the DAC domain. ATP contacts are provided by residues Gly73, Leu91, and Thr104–Thr108.

This sequence belongs to the DisA family. Homooctamer. It depends on Mg(2+) as a cofactor.

The enzyme catalyses 2 ATP = 3',3'-c-di-AMP + 2 diphosphate. Its function is as follows. Participates in a DNA-damage check-point that is active prior to asymmetric division when DNA is damaged. DisA forms globular foci that rapidly scan along the chromosomes during sporulation, searching for lesions. When a lesion is present, DisA pauses at the lesion site. This triggers a cellular response that culminates in a temporary block in sporulation initiation. Functionally, also has diadenylate cyclase activity, catalyzing the condensation of 2 ATP molecules into cyclic di-AMP (c-di-AMP). c-di-AMP acts as a signaling molecule that couples DNA integrity with progression of sporulation. The rise in c-di-AMP level generated by DisA while scanning the chromosome, operates as a positive signal that advances sporulation; upon encountering a lesion, the DisA focus arrests at the damaged site and halts c-di-AMP synthesis. The sequence is that of DNA integrity scanning protein DisA from Clostridium kluyveri (strain ATCC 8527 / DSM 555 / NBRC 12016 / NCIMB 10680 / K1).